The following is a 381-amino-acid chain: Deoxyguanosinetriphosphate triphosphohydrolase-like protein (381 aa).

The HD domain maps to 76–203; that stretch reads RMTHTLEVAG…ADLSDEIAYT (128 aa).

The protein belongs to the dGTPase family. Type 2 subfamily.

In Leptospira borgpetersenii serovar Hardjo-bovis (strain JB197), this protein is Deoxyguanosinetriphosphate triphosphohydrolase-like protein.